The chain runs to 351 residues: Protein-glutamate methylesterase/protein-glutamine glutaminase 2 (351 aa).

The Response regulatory domain maps to lysine 4–leucine 121. Position 55 is a 4-aspartylphosphate (aspartate 55). A CheB-type methylesterase domain is found at arginine 156–leucine 348. Catalysis depends on residues serine 168, histidine 194, and aspartate 290.

This sequence belongs to the CheB family. In terms of processing, phosphorylated by CheA. Phosphorylation of the N-terminal regulatory domain activates the methylesterase activity.

Its subcellular location is the cytoplasm. It carries out the reaction [protein]-L-glutamate 5-O-methyl ester + H2O = L-glutamyl-[protein] + methanol + H(+). It catalyses the reaction L-glutaminyl-[protein] + H2O = L-glutamyl-[protein] + NH4(+). Involved in chemotaxis. Part of a chemotaxis signal transduction system that modulates chemotaxis in response to various stimuli. Catalyzes the demethylation of specific methylglutamate residues introduced into the chemoreceptors (methyl-accepting chemotaxis proteins or MCP) by CheR. Also mediates the irreversible deamidation of specific glutamine residues to glutamic acid. The chain is Protein-glutamate methylesterase/protein-glutamine glutaminase 2 from Shewanella sp. (strain MR-4).